The chain runs to 512 residues: Maturase K (512 aa).

Belongs to the intron maturase 2 family. MatK subfamily.

The protein resides in the plastid. Its subcellular location is the chloroplast. In terms of biological role, usually encoded in the trnK tRNA gene intron. Probably assists in splicing its own and other chloroplast group II introns. The chain is Maturase K from Oenothera argillicola (Appalachian evening primrose).